Here is a 207-residue protein sequence, read N- to C-terminus: A-type ATP synthase subunit E (207 aa).

Belongs to the V-ATPase E subunit family. In terms of assembly, has multiple subunits with at least A(3), B(3), C, D, E, F, H, I and proteolipid K(x).

The protein localises to the cell membrane. Its function is as follows. Component of the A-type ATP synthase that produces ATP from ADP in the presence of a proton gradient across the membrane. The polypeptide is A-type ATP synthase subunit E (Methanosphaera stadtmanae (strain ATCC 43021 / DSM 3091 / JCM 11832 / MCB-3)).